A 113-amino-acid polypeptide reads, in one-letter code: Ferredoxin-1 (113 aa).

4Fe-4S ferredoxin-type domains lie at 2–30 (TYIVTDACVRCKFMDCVEVCPVDCFYEGE) and 31–60 (NFLVINPDECIDCGVCEPECPVDAIKPDTE). Residues Cys9 and Cys17 each coordinate [3Fe-4S] cluster. Residues Cys21, Cys40, Cys43, and Cys46 each coordinate [4Fe-4S] cluster. Cys50 lines the [3Fe-4S] cluster pocket.

It depends on [4Fe-4S] cluster as a cofactor. [3Fe-4S] cluster serves as cofactor.

In Caulobacter vibrioides (strain ATCC 19089 / CIP 103742 / CB 15) (Caulobacter crescentus), this protein is Ferredoxin-1 (fdxA).